We begin with the raw amino-acid sequence, 428 residues long: Histone deacetylase 3 (428 aa).

The segment at 3–316 is histone deacetylase; it reads KTVAYFYDPD…WTYETSLLVE (314 aa). Residues H17, G21, and K25 each coordinate 1D-myo-inositol 1,4,5,6-tetrakisphosphate. H135 is an active-site residue. Zn(2+) contacts are provided by D170, H172, and D259. R265 is a binding site for 1D-myo-inositol 1,4,5,6-tetrakisphosphate. Composition is skewed to basic and acidic residues over residues 388-405 and 415-428; these read DRTD…ENYS and DGDH…DVEI. Residues 388-428 form a disordered region; the sequence is DRTDEADAEERGPEENYSRPEAPNEFYDGDHDNDKESDVEI. A Phosphoserine modification is found at S424.

The protein belongs to the histone deacetylase family. HD type 1 subfamily. As to quaternary structure, interacts with HDAC7 and HDAC9. Interacts with HDAC10, DAXX and DACH1. Found in a complex with NCOR1 and NCOR2. Component of the N-Cor repressor complex, at least composed of NCOR1, NCOR2, HDAC3, TBL1X, TBL1R, CORO2A and GPS2. Interacts with BCOR, MJD2A/JHDM3A, NRIP1, PRDM6 and SRY. Interacts with BTBD14B. Interacts with GLIS2. Interacts (via the DNA-binding domain) with NR2C1; the interaction recruits phosphorylated NR2C1 to PML bodies for sumoylation. Component of the Notch corepressor complex. Interacts with CBFA2T3 and NKAP. Interacts with APEX1; the interaction is not dependent on the acetylated status of APEX1. Interacts with and deacetylates MAPK14. Interacts with ZMYND15. Interacts with SMRT/NCOR2 and BCL6 on DNA enhancer elements. Interacts with INSM1. Interacts with XBP1; the interaction occurs in endothelial cell (EC) under disturbed flow. Interacts (via C-terminus) with CCAR2 (via N-terminus). Interacts with and deacetylates MEF2D. Interacts with BEND3. Interacts with NKAPL. Interacts with DHX36; this interaction occurs in a RNA-dependent manner. Interacts weakly with CRY1; this interaction is enhanced in the presence of FBXL3. Interacts with FBXL3 and BMAL1. Interacts with NCOR1. Interacts with RARA. Interacts with SETD5. Deubiquitinated on 'Lys-63'-linked ubiquitin chains by USP38; leading to a decreased level of histone acetylation. In terms of processing, sumoylated in vitro.

Its subcellular location is the nucleus. It localises to the chromosome. The protein localises to the cytoplasm. It is found in the cytosol. The enzyme catalyses N(6)-acetyl-L-lysyl-[histone] + H2O = L-lysyl-[histone] + acetate. It catalyses the reaction N(6)-acetyl-L-lysyl-[protein] + H2O = L-lysyl-[protein] + acetate. It carries out the reaction N(6)-(2E)-butenoyl-L-lysyl-[protein] + H2O = (2E)-2-butenoate + L-lysyl-[protein]. The catalysed reaction is N(6)-(2-hydroxyisobutanoyl)-L-lysyl-[protein] + H2O = 2-hydroxy-2-methylpropanoate + L-lysyl-[protein]. The enzyme catalyses N(6)-[(S)-lactoyl]-L-lysyl-[protein] + H2O = (S)-lactate + L-lysyl-[protein]. With respect to regulation, inositol tetraphosphate (1D-myo-inositol 1,4,5,6-tetrakisphosphate) promotes the histone deacetylase activity by acting as an intermolecular glue between HDAC3 and NCOR2, thereby promoting its association with the N-Cor complex, a prerequisite for the histone deacetylase activity. Its function is as follows. Histone deacetylase that catalyzes the deacetylation of lysine residues on the N-terminal part of the core histones (H2A, H2B, H3 and H4), and some other non-histone substrates. Histone deacetylation gives a tag for epigenetic repression and plays an important role in transcriptional regulation, cell cycle progression and developmental events. Histone deacetylases act via the formation of large multiprotein complexes, such as N-Cor repressor complex, which activate the histone deacetylase activity. Participates in the BCL6 transcriptional repressor activity by deacetylating the H3 'Lys-27' (H3K27) on enhancer elements, antagonizing EP300 acetyltransferase activity and repressing proximal gene expression. Acts as a molecular chaperone for shuttling phosphorylated NR2C1 to PML bodies for sumoylation. Contributes, together with XBP1 isoform 1, to the activation of NFE2L2-mediated HMOX1 transcription factor gene expression in a PI(3)K/mTORC2/Akt-dependent signaling pathway leading to endothelial cell (EC) survival under disturbed flow/oxidative stress. Regulates both the transcriptional activation and repression phases of the circadian clock in a deacetylase activity-independent manner. During the activation phase, promotes the accumulation of ubiquitinated BMAL1 at the E-boxes and during the repression phase, blocks FBXL3-mediated CRY1/2 ubiquitination and promotes the interaction of CRY1 and BMAL1. The NCOR1-HDAC3 complex regulates the circadian expression of the core clock gene BMAL1 and the genes involved in lipid metabolism in the liver. Also functions as a deacetylase for non-histone targets, such as KAT5, MEF2D, MAPK14, RARA and STAT3. Serves as a corepressor of RARA, mediating its deacetylation and repression, leading to inhibition of RARE DNA element binding. In association with RARA, plays a role in the repression of microRNA-10a and thereby in the inflammatory response. In addition to protein deacetylase activity, also acts as a protein-lysine deacylase by recognizing other acyl groups: catalyzes removal of (2E)-butenoyl (crotonyl), lactoyl (lactyl) and 2-hydroxyisobutanoyl (2-hydroxyisobutyryl) acyl groups from lysine residues, leading to protein decrotonylation, delactylation and de-2-hydroxyisobutyrylation, respectively. Catalyzes decrotonylation of MAPRE1/EB1. Mediates delactylation NBN/NBS1, thereby inhibiting DNA double-strand breaks (DSBs) via homologous recombination (HR). This Pongo abelii (Sumatran orangutan) protein is Histone deacetylase 3 (HDAC3).